We begin with the raw amino-acid sequence, 187 residues long: Elongation factor P (187 aa).

N6-(3,6-diaminohexanoyl)-5-hydroxylysine is present on K34.

This sequence belongs to the elongation factor P family. May be beta-lysylated on the epsilon-amino group of Lys-34 by the combined action of EpmA and EpmB, and then hydroxylated on the C5 position of the same residue by EpmC (if this protein is present). Lysylation is critical for the stimulatory effect of EF-P on peptide-bond formation. The lysylation moiety may extend toward the peptidyltransferase center and stabilize the terminal 3-CCA end of the tRNA. Hydroxylation of the C5 position on Lys-34 may allow additional potential stabilizing hydrogen-bond interactions with the P-tRNA.

The protein localises to the cytoplasm. It participates in protein biosynthesis; polypeptide chain elongation. Its function is as follows. Involved in peptide bond synthesis. Alleviates ribosome stalling that occurs when 3 or more consecutive Pro residues or the sequence PPG is present in a protein, possibly by augmenting the peptidyl transferase activity of the ribosome. Modification of Lys-34 is required for alleviation. In Vesicomyosocius okutanii subsp. Calyptogena okutanii (strain HA), this protein is Elongation factor P.